A 362-amino-acid polypeptide reads, in one-letter code: Peptide chain release factor 1 (362 aa).

The residue at position 237 (Gln237) is an N5-methylglutamine.

The protein belongs to the prokaryotic/mitochondrial release factor family. Methylated by PrmC. Methylation increases the termination efficiency of RF1.

It localises to the cytoplasm. Its function is as follows. Peptide chain release factor 1 directs the termination of translation in response to the peptide chain termination codons UAG and UAA. This Legionella pneumophila (strain Corby) protein is Peptide chain release factor 1.